Reading from the N-terminus, the 960-residue chain is Angiomotin-like protein 1 (960 aa).

A disordered region spans residues 196–248; sequence SQFFRGQQPPPPPPQQQPGAVGHSYYMAGGASQKARTEGRPTVSRANSGQAHK. Ser243, Ser271, and Ser297 each carry phosphoserine. Residues 261-281 are a coiled coil; the sequence is RSLSERIMQLSLERNGAKQHL. 3 disordered regions span residues 277–317, 381–407, and 413–432; these read AKQH…EYPF, LPFP…LHSV, and PPMA…SQQL. Low complexity predominate over residues 388–401; it reads QQHSPVSSQNSSVS. 2 coiled-coil regions span residues 440 to 641 and 667 to 697; these read VERA…WLER and ALME…VEES. Position 722 is a phosphoserine (Ser722). Residues 731 to 761 adopt a coiled-coil conformation; it reads SLEAHIWQEEEEVVQATRRCQDMEYTIKNLH. The tract at residues 775 to 826 is disordered; the sequence is QQRSRKDAGKTDSSSLRPARSVPSIAAATGTHSRQTSLTSSQLAEERKEEKT. Ser795, Ser807, and Ser830 each carry phosphoserine. The segment covering 804–817 has biased composition (polar residues); that stretch reads GTHSRQTSLTSSQL. Residues 842 to 952 form a disordered region; the sequence is NDHASTPLLP…NLLHKPEFPD (111 aa). Positions 845-870 are enriched in low complexity; the sequence is ASTPLLPTPSAATLSPPTPGTSASSA. Over residues 898–911 the composition is skewed to polar residues; that stretch reads PTRSRLSGTPSNSP. A Phosphoserine modification is found at Ser904. Residue Thr906 is modified to Phosphothreonine. The residue at position 910 (Ser910) is a Phosphoserine. A PDZ-binding motif is present at residues 957–960; it reads EVLI.

This sequence belongs to the angiomotin family. Post-translationally, polyubiquitinated by NEDD4, leading to proteasomal degradation.

The protein resides in the cell junction. It localises to the tight junction. Its function is as follows. Inhibits the Wnt/beta-catenin signaling pathway, probably by recruiting CTNNB1 to recycling endosomes and hence preventing its translocation to the nucleus. The protein is Angiomotin-like protein 1 (AMOTL1) of Bos taurus (Bovine).